A 344-amino-acid polypeptide reads, in one-letter code: L-rhamnose-proton symporter (344 aa).

Transmembrane regions (helical) follow at residues 4-24 (AITMGIFWHLIGAASAACFYA), 38-58 (WSVGGIVSWIILPWAISALLL), 68-88 (FSLSTLLPVFLFGAMWGIGNI), 101-121 (MGIGIAIGITLIVGTLMTPII), 137-157 (TLLGVLVALIGVGIVTRAGQL), 175-195 (LVLAVMCGIFSAGMSFAMNAA), 214-234 (LPSYVVIMGGGAIINLGFCFI), 259-279 (VLLSVLGGLMWYLQFFFYAWG), 290-310 (ISWMLHMSFYVLCGGIVGLVL), and 323-343 (VLSLGCVVIIVAANIVGIGMA).

The protein belongs to the L-rhamnose transporter (TC 2.A.7.6) family.

The protein localises to the cell inner membrane. The catalysed reaction is L-rhamnopyranose(in) + H(+)(in) = L-rhamnopyranose(out) + H(+)(out). Functionally, uptake of L-rhamnose across the cytoplasmic membrane with the concomitant transport of protons into the cell (symport system). In Escherichia coli O1:K1 / APEC, this protein is L-rhamnose-proton symporter.